The chain runs to 578 residues: MSLLAHLQHQGLRQIVLCPGSRSAPLALAAGGLARQGELTLVTAIDERSAAFHALGLAQASGRATAVITTSGTAVANLLPAAVEADRSCIPLLLLTADRPTRLKDCGANQTVNQEQFLAPVCRAFLSSPGEGLHHENDVQLQSLASSLWERALGSAGPVHLNLPFEEPLHPSEAEQQAFWSAWQPLPAAGGEHHPAEPRSTPWDGPVPDWSRPGVVVAGPWRGLEADRPAYQRALQELALTTGWPVLLDPLAAAPQDLPGVIRHWDLMLPAGLPTPERSLQVLRLGPLPASRRLEAWLRALGPGQWLISEGDCRSLDPLGLASQCSLGLASWWDCVSPNPLSLAPGPSSLLTAWRDLEAAVAGELARQLPQAGPVSEPALMHVLPQLLPPALPVMLAASSPVRDWQAFAAADAGQRRCFSFRGASGIDGTLSLAVGLSRELGPLVLLTGDLALLHDSNGWLLASASAPPLLVLLIDNGGGGIFGQLPIPTAPAAAFDHLFAMPQAVDPLALARAHAVPTRQLASLEDLPQALEWGLDQRRAVLLRVCTNRGADAALRQMLRREVEQALCVVQGSTKEG.

The disordered stretch occupies residues 186–208 (LPAAGGEHHPAEPRSTPWDGPVP).

The protein belongs to the TPP enzyme family. MenD subfamily. As to quaternary structure, homodimer. Requires Mg(2+) as cofactor. Mn(2+) is required as a cofactor. It depends on thiamine diphosphate as a cofactor.

The catalysed reaction is isochorismate + 2-oxoglutarate + H(+) = 5-enolpyruvoyl-6-hydroxy-2-succinyl-cyclohex-3-ene-1-carboxylate + CO2. It functions in the pathway quinol/quinone metabolism; 1,4-dihydroxy-2-naphthoate biosynthesis; 1,4-dihydroxy-2-naphthoate from chorismate: step 2/7. The protein operates within cofactor biosynthesis; phylloquinone biosynthesis. Functionally, catalyzes the thiamine diphosphate-dependent decarboxylation of 2-oxoglutarate and the subsequent addition of the resulting succinic semialdehyde-thiamine pyrophosphate anion to isochorismate to yield 2-succinyl-5-enolpyruvyl-6-hydroxy-3-cyclohexene-1-carboxylate (SEPHCHC). The polypeptide is 2-succinyl-5-enolpyruvyl-6-hydroxy-3-cyclohexene-1-carboxylate synthase (Synechococcus sp. (strain WH7803)).